Here is a 656-residue protein sequence, read N- to C-terminus: Methylenetetrahydrofolate reductase (NADPH) (656 aa).

A compositionally biased stretch (polar residues) spans 1–12 (MVNEARGNSSLN). A disordered region spans residues 1–44 (MVNEARGNSSLNPCLEGSASSGSESSKDSSRCSTPGLDPERHER). 10 positions are modified to phosphoserine: serine 9, serine 10, serine 18, serine 20, serine 21, serine 23, serine 25, serine 26, serine 29, and serine 30. Residue threonine 34 is modified to Phosphothreonine. The active-site Proton donor/acceptor is the glutamate 63. Position 63-68 (63-68 (EFFPPR)) interacts with NAD(+). The residue at position 90 (tyrosine 90) is a Phosphotyrosine. Phosphothreonine is present on threonine 94. NAD(+) is bound at residue 94 to 95 (TW). An FAD-binding site is contributed by 94-95 (TW). Phosphoserine is present on serine 103. FAD-binding positions include histidine 127, 157 to 159 (RGD), 174 to 175 (YA), tyrosine 197, 201 to 204 (HPEA), aspartate 210, and lysine 217. Residue aspartate 159 coordinates substrate. Substrate-binding residues include glutamine 228, tyrosine 321, and arginine 325. Serine 394 is subject to Phosphoserine. Phosphothreonine is present on threonine 451. S-adenosyl-L-methionine contacts are provided by residues asparagine 456, 461–464 (AAET), 481–485 (TINSQ), threonine 560, and threonine 573.

It belongs to the methylenetetrahydrofolate reductase family. As to quaternary structure, homodimer. Requires FAD as cofactor. In terms of processing, phosphorylation of an N-terminal serine-rich phosphorylation region increases sensitivity to S-adenosylmethionine and inhibition.

The catalysed reaction is (6S)-5-methyl-5,6,7,8-tetrahydrofolate + NADP(+) = (6R)-5,10-methylene-5,6,7,8-tetrahydrofolate + NADPH + H(+). Its pathway is one-carbon metabolism; tetrahydrofolate interconversion. Allosterically regulated by S-adenosylmethionine (SAM). Functionally, catalyzes the conversion of 5,10-methylenetetrahydrofolate to 5-methyltetrahydrofolate, a cosubstrate for homocysteine remethylation to methionine. Represents a key regulatory connection between the folate and methionine cycles. The sequence is that of Methylenetetrahydrofolate reductase (NADPH) from Homo sapiens (Human).